Consider the following 451-residue polypeptide: UDP-glycosyltransferase 13 (451 aa).

His15 serves as the catalytic Proton acceptor. Position 15 (His15) interacts with an anthocyanidin. The active-site Charge relay is Asp93. The UDP-alpha-D-glucose site is built by Ala326, Gln328, His343, Trp346, Asn347, Ser348, and Glu351. Ala366 lines the an anthocyanidin pocket. Residues Glu367 and Gln368 each coordinate UDP-alpha-D-glucose.

Belongs to the UDP-glycosyltransferase family. In terms of tissue distribution, expressed in roots. Detected in stems and leaves.

The catalysed reaction is a 7-hydroxyisoflavone + UDP-alpha-D-glucose = a 7-hydroxyisoflavone 7-O-beta-D-glucoside + UDP + H(+). Functionally, isoflavone 7-O-glucosyltransferase converting daidzein to daidzin, genistein to genistin and formononetin to ononin. Shows some activity toward the flavanones liquiritigenin and naringenin, but not toward cyanidin, isoliquiritigenin, apigenin, luteolin, kaempferol, quercetin, daidzin and puerarin. In Pueraria montana var. lobata (Kudzu vine), this protein is UDP-glycosyltransferase 13.